A 184-amino-acid chain; its full sequence is Cyclin-dependent kinase inhibitor 1 (184 aa).

Over residues Ile-85–Thr-98 the composition is skewed to low complexity. The segment at Ile-85–Tyr-184 is disordered.

This sequence belongs to the CDI family. As to quaternary structure, interacts with cyd-1; the interaction is direct. In embryos, expression is first seen in pharyngeal primordium and later in all differentiating cells. Post embryonic expression corresponds to developmental patterns of cell cycle progression in many tissues including sex myoblasts, distal tip cells, vulval cells, seam cells, neurons, intestine cells and hypodermal cells.

The protein localises to the nucleus. Negative cell-cycle regulator that functions at the G1-to-S-phase transition. Required for suspension of the cell cycle in dauer larvae and starved L1 larvae. In vulval precursor cells (VPCs), a pathway of heterochronic genes acts via cki-1 to maintain VPCs in G1 during the L2 larval stage. Cul-2 may function in ubiquitin-mediated degradation by targeting cki-1 for degradation. Involved in distal tip cell development by repressing and modulating cye-1/cdk-2 activity levels in Z1.aa/Z4.pp and in Z1.ap/Z4.pa. This is Cyclin-dependent kinase inhibitor 1 from Caenorhabditis elegans.